A 244-amino-acid chain; its full sequence is 3-deoxy-manno-octulosonate cytidylyltransferase (244 aa).

This sequence belongs to the KdsB family.

The protein localises to the cytoplasm. The enzyme catalyses 3-deoxy-alpha-D-manno-oct-2-ulosonate + CTP = CMP-3-deoxy-beta-D-manno-octulosonate + diphosphate. The protein operates within nucleotide-sugar biosynthesis; CMP-3-deoxy-D-manno-octulosonate biosynthesis; CMP-3-deoxy-D-manno-octulosonate from 3-deoxy-D-manno-octulosonate and CTP: step 1/1. It participates in bacterial outer membrane biogenesis; lipopolysaccharide biosynthesis. Its function is as follows. Activates KDO (a required 8-carbon sugar) for incorporation into bacterial lipopolysaccharide in Gram-negative bacteria. The sequence is that of 3-deoxy-manno-octulosonate cytidylyltransferase from Dichelobacter nodosus (strain VCS1703A).